The sequence spans 104 residues: Large ribosomal subunit protein uL24 (104 aa).

The protein belongs to the universal ribosomal protein uL24 family. Part of the 50S ribosomal subunit.

One of two assembly initiator proteins, it binds directly to the 5'-end of the 23S rRNA, where it nucleates assembly of the 50S subunit. In terms of biological role, one of the proteins that surrounds the polypeptide exit tunnel on the outside of the subunit. This Flavobacterium johnsoniae (strain ATCC 17061 / DSM 2064 / JCM 8514 / BCRC 14874 / CCUG 350202 / NBRC 14942 / NCIMB 11054 / UW101) (Cytophaga johnsonae) protein is Large ribosomal subunit protein uL24.